The following is a 298-amino-acid chain: 4-hydroxy-tetrahydrodipicolinate synthase (298 aa).

Thr51 contacts pyruvate. The active-site Proton donor/acceptor is the Tyr139. The active-site Schiff-base intermediate with substrate is the Lys167. Ile209 is a pyruvate binding site.

The protein belongs to the DapA family. As to quaternary structure, homotetramer; dimer of dimers.

The protein localises to the cytoplasm. The catalysed reaction is L-aspartate 4-semialdehyde + pyruvate = (2S,4S)-4-hydroxy-2,3,4,5-tetrahydrodipicolinate + H2O + H(+). It functions in the pathway amino-acid biosynthesis; L-lysine biosynthesis via DAP pathway; (S)-tetrahydrodipicolinate from L-aspartate: step 3/4. Catalyzes the condensation of (S)-aspartate-beta-semialdehyde [(S)-ASA] and pyruvate to 4-hydroxy-tetrahydrodipicolinate (HTPA). In Haemophilus influenzae (strain 86-028NP), this protein is 4-hydroxy-tetrahydrodipicolinate synthase.